The chain runs to 225 residues: ATP-dependent dethiobiotin synthetase BioD 1 (225 aa).

2 residues coordinate Mg(2+): Glu13 and Thr17. ATP is bound at residue 13-18 (EVGKTV). Residue Lys38 is part of the active site. Residue Ser42 coordinates substrate. Residues Asp55 and Glu116 each coordinate Mg(2+). ATP is bound by residues Asp55, 116–119 (EGAG), and 176–177 (ND). Tyr188 serves as a coordination point for substrate. ATP contacts are provided by residues 205–207 (PWL) and Glu212.

The protein belongs to the dethiobiotin synthetase family. In terms of assembly, homodimer. Mg(2+) serves as cofactor.

Its subcellular location is the cytoplasm. It carries out the reaction (7R,8S)-7,8-diammoniononanoate + CO2 + ATP = (4R,5S)-dethiobiotin + ADP + phosphate + 3 H(+). Its pathway is cofactor biosynthesis; biotin biosynthesis; biotin from 7,8-diaminononanoate: step 1/2. Its function is as follows. Catalyzes a mechanistically unusual reaction, the ATP-dependent insertion of CO2 between the N7 and N8 nitrogen atoms of 7,8-diaminopelargonic acid (DAPA, also called 7,8-diammoniononanoate) to form a ureido ring. Only CTP can partially replace ATP while diaminobiotin is only 37% as effective as 7,8-diaminopelargonic acid. In another study both CTP and GTP (but not ITP, TTP or UTP) can partially replace ATP. In Escherichia coli (strain K12), this protein is ATP-dependent dethiobiotin synthetase BioD 1.